The primary structure comprises 301 residues: Probable alpha-L-glutamate ligase (301 aa).

Positions leucine 104–glutamate 287 constitute an ATP-grasp domain. ATP-binding positions include lysine 141, glutamate 178–phenylalanine 179, aspartate 187, and arginine 211–asparagine 213. The Mg(2+) site is built by aspartate 248, glutamate 260, and asparagine 262. Aspartate 248, glutamate 260, and asparagine 262 together coordinate Mn(2+).

Belongs to the RimK family. Requires Mg(2+) as cofactor. The cofactor is Mn(2+).

This is Probable alpha-L-glutamate ligase from Thioalkalivibrio sulfidiphilus (strain HL-EbGR7).